The primary structure comprises 29 residues: GIFDKLKNFAKGVAQSLLNKASCKLSGQC.

An intrachain disulfide couples Cys23 to Cys29.

Belongs to the frog skin active peptide (FSAP) family. Brevinin subfamily. As to expression, expressed by the skin glands.

The protein localises to the secreted. Shows antibacterial activity against representative Gram-negative and Gram-positive bacterial species, and hemolytic activity. The protein is Brevinin-2Ee of Pelophylax lessonae (Pool frog).